Consider the following 487-residue polypeptide: Glutamate--tRNA ligase 2 (487 aa).

Residues Pro-31 to Gly-41 carry the 'HIGH' region motif. A 'KMSKS' region motif is present at residues Pro-254–Arg-258. An ATP-binding site is contributed by Lys-257.

Belongs to the class-I aminoacyl-tRNA synthetase family. Glutamate--tRNA ligase type 1 subfamily. Monomer.

It is found in the cytoplasm. It catalyses the reaction tRNA(Glu) + L-glutamate + ATP = L-glutamyl-tRNA(Glu) + AMP + diphosphate. Catalyzes the attachment of glutamate to tRNA(Glu) in a two-step reaction: glutamate is first activated by ATP to form Glu-AMP and then transferred to the acceptor end of tRNA(Glu). In Thermotoga maritima (strain ATCC 43589 / DSM 3109 / JCM 10099 / NBRC 100826 / MSB8), this protein is Glutamate--tRNA ligase 2.